The sequence spans 1031 residues: Caprin-2 (1031 aa).

Disordered regions lie at residues 1 to 27 (MKSA…QSTL), 364 to 458 (LQEE…SWEN), 500 to 520 (PKDV…LPKD), 605 to 658 (DQAS…SSEA), and 830 to 876 (RSGT…SMTP). Composition is skewed to polar residues over residues 425–439 (VSVQ…SWTT) and 446–458 (ASVQ…SWEN). Positions 608–646 (SSGSETEFTTSETPEMVVSPCKPKPASALASPNPPLSKS) are enriched in low complexity. The segment covering 830 to 853 (RSGTSSGLQANSRAGWSDSSQVSS) has biased composition (polar residues). Phosphoserine is present on residues S852 and S853. Positions 897–1031 (PQQMRVAFSA…TFSGYLLYQD (135 aa)) constitute a C1q domain. 2 residues coordinate Ca(2+): D982 and E988.

This sequence belongs to the caprin family. In terms of assembly, homotrimer; via C1q domain. Found in a complex with LRP6, CCNY and CDK14 during G2/M stage; CAPRIN2 functions as a scaffold for the complex by binding to CCNY via its N terminus and to CDK14 via its C terminus. Interacts with LRP5. Interacts with LRP6. Specifically expressed in brain (at protein level).

The protein localises to the cytoplasm. It localises to the cell membrane. Functionally, promotes phosphorylation of the Wnt coreceptor LRP6, leading to increased activity of the canonical Wnt signaling pathway. Facilitates constitutive LRP6 phosphorylation by CDK14/CCNY during G2/M stage of the cell cycle, which may potentiate cells for Wnt signaling. May regulate the transport and translation of mRNAs, modulating for instance the expression of proteins involved in synaptic plasticity in neurons. Involved in regulation of growth as erythroblasts shift from a highly proliferative state towards their terminal phase of differentiation. May be involved in apoptosis. In Mus musculus (Mouse), this protein is Caprin-2.